The primary structure comprises 464 residues: Glutamate--tRNA ligase (464 aa).

A 'HIGH' region motif is present at residues 8-18 (PSPTGYMHLGN). Residues cysteine 96, cysteine 98, cysteine 123, and histidine 125 each contribute to the Zn(2+) site. The 'KMSKS' region motif lies at 240–244 (KLSKR). Position 243 (lysine 243) interacts with ATP.

It belongs to the class-I aminoacyl-tRNA synthetase family. Glutamate--tRNA ligase type 1 subfamily. As to quaternary structure, monomer. The cofactor is Zn(2+).

The protein resides in the cytoplasm. It carries out the reaction tRNA(Glu) + L-glutamate + ATP = L-glutamyl-tRNA(Glu) + AMP + diphosphate. In terms of biological role, catalyzes the attachment of glutamate to tRNA(Glu) in a two-step reaction: glutamate is first activated by ATP to form Glu-AMP and then transferred to the acceptor end of tRNA(Glu). This chain is Glutamate--tRNA ligase, found in Hydrogenobaculum sp. (strain Y04AAS1).